Reading from the N-terminus, the 569-residue chain is Glucose-6-phosphate isomerase, cytosolic 1A (569 aa).

Glutamate 360 (proton donor) is an active-site residue. Active-site residues include histidine 391 and lysine 516.

Belongs to the GPI family. In terms of assembly, homodimer.

It localises to the cytoplasm. The catalysed reaction is alpha-D-glucose 6-phosphate = beta-D-fructose 6-phosphate. It functions in the pathway carbohydrate degradation; glycolysis; D-glyceraldehyde 3-phosphate and glycerone phosphate from D-glucose: step 2/4. This chain is Glucose-6-phosphate isomerase, cytosolic 1A (PGIC1-A), found in Clarkia lewisii (Farewell-to-spring).